Reading from the N-terminus, the 379-residue chain is Cobalt-precorrin-5B C(1)-methyltransferase (379 aa).

Belongs to the CbiD family.

The catalysed reaction is Co-precorrin-5B + S-adenosyl-L-methionine = Co-precorrin-6A + S-adenosyl-L-homocysteine. The protein operates within cofactor biosynthesis; adenosylcobalamin biosynthesis; cob(II)yrinate a,c-diamide from sirohydrochlorin (anaerobic route): step 6/10. Functionally, catalyzes the methylation of C-1 in cobalt-precorrin-5B to form cobalt-precorrin-6A. This chain is Cobalt-precorrin-5B C(1)-methyltransferase, found in Salmonella heidelberg (strain SL476).